The chain runs to 137 residues: Cellular retinoic acid-binding protein 1 (137 aa).

A Nuclear localization signal motif is present at residues 21–31 (KALGVNAMLRK). 132–134 (RIY) serves as a coordination point for all-trans-retinoate.

Belongs to the calycin superfamily. Fatty-acid binding protein (FABP) family.

The protein localises to the cytoplasm. Its function is as follows. Cytosolic CRABPs may regulate the access of retinoic acid to the nuclear retinoic acid receptors. In Hippocampus comes (Tiger tail seahorse), this protein is Cellular retinoic acid-binding protein 1 (crabp1).